A 526-amino-acid chain; its full sequence is Exodeoxyribonuclease 7 large subunit (526 aa).

Residues 496–526 (GAMTTEGGTPPAGAKKRSAKPADPTKQGSLF) are disordered.

It belongs to the XseA family. As to quaternary structure, heterooligomer composed of large and small subunits.

The protein localises to the cytoplasm. It carries out the reaction Exonucleolytic cleavage in either 5'- to 3'- or 3'- to 5'-direction to yield nucleoside 5'-phosphates.. In terms of biological role, bidirectionally degrades single-stranded DNA into large acid-insoluble oligonucleotides, which are then degraded further into small acid-soluble oligonucleotides. This Rhizobium etli (strain CIAT 652) protein is Exodeoxyribonuclease 7 large subunit.